A 389-amino-acid polypeptide reads, in one-letter code: GTPase Obg (389 aa).

In terms of domain architecture, Obg spans 1-159 (MKFVDEAVIR…RSLKLELLLL (159 aa)). The 174-residue stretch at 160 to 333 (ADVGLLGMPN…LALKLLDYIA (174 aa)) folds into the OBG-type G domain. GTP contacts are provided by residues 166–173 (GMPNAGKS), 191–195 (FTTLV), 213–216 (DIPG), 283–286 (NKTD), and 314–316 (SAY). Mg(2+) contacts are provided by Ser173 and Thr193.

This sequence belongs to the TRAFAC class OBG-HflX-like GTPase superfamily. OBG GTPase family. In terms of assembly, monomer. Mg(2+) is required as a cofactor.

The protein resides in the cytoplasm. An essential GTPase which binds GTP, GDP and possibly (p)ppGpp with moderate affinity, with high nucleotide exchange rates and a fairly low GTP hydrolysis rate. Plays a role in control of the cell cycle, stress response, ribosome biogenesis and in those bacteria that undergo differentiation, in morphogenesis control. In Shewanella baltica (strain OS223), this protein is GTPase Obg.